A 506-amino-acid chain; its full sequence is Cytochrome P450 94B3 (506 aa).

A helical transmembrane segment spans residues 2-22 (AFLLSFLILAFLITIIFFLSS). C447 lines the heme pocket.

It belongs to the cytochrome P450 family. Heme serves as cofactor.

It is found in the membrane. The protein localises to the endoplasmic reticulum membrane. It catalyses the reaction a jasmonyl-L-amino acid + reduced [NADPH--hemoprotein reductase] + O2 = a 12-hydroxyjasmonyl-L-alpha-amino acid + oxidized [NADPH--hemoprotein reductase] + H2O + H(+). It carries out the reaction L-isoleucine-(+)-7-isojasmonate + NADPH + O2 + H(+) = L-isoleucine-(+)-12-hydroxy-7-isojasmonate + NADP(+) + H2O. The enzyme catalyses a jasmonyl-L-isoleucinate + NADPH + O2 + H(+) = L-isoleucine-12-hydroxyjasmonate + NADP(+) + H2O. In terms of biological role, hydroxylase involved in the oxidation of the plant hormone jasmonoyl-L-isoleucine (JA-Ile), a bioactive phytohormone of the jasmonate-mediated signaling pathway. Converts JA-Ile to 12-hydroxy-JA-Ile. Exerts negative feedback control on JA-Ile levels and plays a key role in attenuation of jasmonate responses. Negatively regulates the expression of wound-induced genes TIFY11A/JAZ5, TIFY5A/JAZ8 and TIFY5A/JAZ10. Catalyzes the hydroxylation of jasmonoyl-L-valine (JA-Val), jasmonoyl-L-leucine (JA-Leu) and jasmonoyl-L-phenylalanine (JA-Phe) in vitro. Converts JA-Val, JA-Leu and JA-Phe to 12-hydroxy-JA-Val, 12-hydroxy-JA-Leu and 12-hydroxy-JA-Phe, respectively. This is Cytochrome P450 94B3 from Arabidopsis thaliana (Mouse-ear cress).